Here is a 90-residue protein sequence, read N- to C-terminus: Conotoxin Mr22.1 (90 aa).

Positions 1-18 (MMTRVFFAMFFLMALTEG) are cleaved as a signal peptide. A propeptide spanning residues 19–49 (WPRLYDSDCVRGRNMHITCFKDQTCGLTVKR) is cleaved from the precursor. 6'-bromotryptophan is present on tryptophan 75.

The protein belongs to the E superfamily. In terms of processing, contains 4 disulfide bonds. Expressed by the venom duct.

Its subcellular location is the secreted. This is Conotoxin Mr22.1 from Conus marmoreus (Marble cone).